The chain runs to 139 residues: Small integral membrane protein 34 (139 aa).

The chain crosses the membrane as a helical span at residues 46–66 (GTSAAWYILTIIGIYAVIFVF).

The protein resides in the membrane. The sequence is that of Small integral membrane protein 34 from Homo sapiens (Human).